Consider the following 466-residue polypeptide: Ribulose bisphosphate carboxylase large chain (466 aa).

K5 bears the N6,N6,N6-trimethyllysine mark. Residues N114 and T164 each coordinate substrate. Catalysis depends on K166, which acts as the Proton acceptor. K168 serves as a coordination point for substrate. The Mg(2+) site is built by K192, D194, and E195. Position 192 is an N6-carboxylysine (K192). Catalysis depends on H285, which acts as the Proton acceptor. 3 residues coordinate substrate: R286, H318, and S370.

The protein belongs to the RuBisCO large chain family. Type I subfamily. In terms of assembly, heterohexadecamer of 8 large chains and 8 small chains; disulfide-linked. The disulfide link is formed within the large subunit homodimers. Mg(2+) is required as a cofactor. Post-translationally, the disulfide bond which can form in the large chain dimeric partners within the hexadecamer appears to be associated with oxidative stress and protein turnover.

It is found in the plastid. It localises to the chloroplast. The enzyme catalyses 2 (2R)-3-phosphoglycerate + 2 H(+) = D-ribulose 1,5-bisphosphate + CO2 + H2O. It carries out the reaction D-ribulose 1,5-bisphosphate + O2 = 2-phosphoglycolate + (2R)-3-phosphoglycerate + 2 H(+). In terms of biological role, ruBisCO catalyzes two reactions: the carboxylation of D-ribulose 1,5-bisphosphate, the primary event in carbon dioxide fixation, as well as the oxidative fragmentation of the pentose substrate in the photorespiration process. Both reactions occur simultaneously and in competition at the same active site. This is Ribulose bisphosphate carboxylase large chain from Bixa orellana (Lipstick tree).